The sequence spans 142 residues: MTNSIYSTTMISNGGRDGRVFSPDNTFVQSLATPKEMGGQGGNDTNPEQLFAAGYSACFNSALSLILSQNKISDANPEVEITIELLKDDTDNGFKLGADIKVTLENMSQQDAEKFVEQAHQFCPYSKATRGNIDVQLDVTAQ.

The protein belongs to the OsmC/Ohr family.

The chain is Organic hydroperoxide resistance protein-like 2 from Staphylococcus epidermidis (strain ATCC 35984 / DSM 28319 / BCRC 17069 / CCUG 31568 / BM 3577 / RP62A).